The chain runs to 704 residues: Histone-lysine N-methyltransferase, H3 lysine-9 specific SUVH1 (704 aa).

2 disordered regions span residues 1–21 (MEQGLRSDGNNPPSIDKTRVL) and 68–176 (PFVA…QAEG). Composition is skewed to polar residues over residues 80 to 90 (ESSQQTPSGVP) and 109 to 121 (SFRTPTTANGNSG). Positions 159 to 170 (GKKRGRPKKPRR) are enriched in basic residues. The 148-residue stretch at 265 to 412 (GNAPGIEVGD…CNVFKYKLLR (148 aa)) folds into the YDG domain. A Pre-SET domain is found at 487–548 (PSCHCVGGCQ…NCRNRMSQGG (62 aa)). 9 residues coordinate Zn(2+): Cys489, Cys491, Cys495, Cys502, Cys504, Cys530, Cys534, Cys536, and Cys540. Positions 551–681 (ARLEVFKTKN…PMQELTFDYG (131 aa)) constitute an SET domain. Residues 561–563 (RGW), Asp593, Tyr595, Arg635, and 638–639 (NH) contribute to the S-adenosyl-L-methionine site. Cys641, Cys692, Cys694, and Cys699 together coordinate Zn(2+). Positions 688 to 704 (RRKKCLCGSLNCRGYFY) constitute a Post-SET domain.

Belongs to the class V-like SAM-binding methyltransferase superfamily. Histone-lysine methyltransferase family. Suvar3-9 subfamily. Interacts with LHP1. In terms of tissue distribution, expressed in roots, stems, leaves and flowers.

The protein resides in the nucleus. It localises to the chromosome. It catalyses the reaction N(6)-methyl-L-lysyl(27)-[histone H3] + S-adenosyl-L-methionine = N(6),N(6)-dimethyl-L-lysyl(27)-[histone H3] + S-adenosyl-L-homocysteine + H(+). The catalysed reaction is L-lysyl(9)-[histone H3] + 2 S-adenosyl-L-methionine = N(6),N(6)-dimethyl-L-lysyl(9)-[histone H3] + 2 S-adenosyl-L-homocysteine + 2 H(+). The enzyme catalyses L-lysyl(27)-[histone H3] + S-adenosyl-L-methionine = N(6)-methyl-L-lysyl(27)-[histone H3] + S-adenosyl-L-homocysteine + H(+). Its function is as follows. Histone methyltransferase. Methylates in vitro both 'Lys-9' and 'Lys-27' of histone H3. Required for in vivo dimethylation of 'Lys-9'. H3 'Lys-9' methylation represents a specific tag for epigenetic control for plant development and transcriptional repression. The polypeptide is Histone-lysine N-methyltransferase, H3 lysine-9 specific SUVH1 (SUVH1) (Nicotiana tabacum (Common tobacco)).